The primary structure comprises 1116 residues: Ubiquitin C-terminal hydrolase 12 (1116 aa).

Residues 1–10 (MTMMTPPPVD) show a composition bias toward pro residues. A disordered region spans residues 1–52 (MTMMTPPPVDQPEDEEMLVPNSDLVDGPAQPMEVTQPETAASTVENQPAEDP). Over residues 36–46 (QPETAASTVEN) the composition is skewed to polar residues. The region spanning 54–179 (TLKFTWTIPN…NDTVLVEAEV (126 aa)) is the MATH domain. Residues 199–524 (VGLKNQGATC…NAYMLVYIRE (326 aa)) enclose the USP domain. Cys-208 serves as the catalytic Nucleophile. His-455 functions as the Proton acceptor in the catalytic mechanism.

The protein belongs to the peptidase C19 family. In terms of assembly, interacts with SIC/RON3.

It catalyses the reaction Thiol-dependent hydrolysis of ester, thioester, amide, peptide and isopeptide bonds formed by the C-terminal Gly of ubiquitin (a 76-residue protein attached to proteins as an intracellular targeting signal).. In terms of biological role, recognizes and hydrolyzes the peptide bond at the C-terminal Gly of ubiquitin. Involved in the processing of poly-ubiquitin precursors as well as that of ubiquitinated proteins. Positive regulator of root meristem development that, together with UBP13, prevents the ubiquitination and turnover of RGFR1 induced by the RGF1 hormone peptide, thus influencing PLT1 and PLT2 expression. The protein is Ubiquitin C-terminal hydrolase 12 of Arabidopsis thaliana (Mouse-ear cress).